A 2467-amino-acid polypeptide reads, in one-letter code: Transcription factor TFIIIB component B'' homolog (2467 aa).

Disordered regions lie at residues 1-145 (MFRR…RYRI) and 159-243 (LRKE…VDDG). Residues 1 to 301 (MFRRARLSVK…TYSSFRKNYY (301 aa)) form an interaction with ZBTB43 region. The segment covering 81–92 (AAESSTLSSASS) has biased composition (low complexity). A compositionally biased stretch (polar residues) spans 99 to 118 (SSTSSLVQPSGSAPSQSRPL). Basic and acidic residues-rich tracts occupy residues 133–144 (AKEKQPCSDRYR) and 177–186 (RPPDRSKMTM). Residues 144-177 (RIYKARKLREMLKEELRKEKKQWKNKFSTNESQR) are a coiled coil. The segment covering 231–242 (NDNEDVEEEVDD) has biased composition (acidic residues). In terms of domain architecture, Myb-like spans 297–347 (RKNYYSKPWSNKETDMFFLAISMVGTDFSMIGQLFPHRARIEIKNKFKREE). The tract at residues 357–472 (AFQEKRPFDF…QEKKRRRNQG (116 aa)) is required for phosphorylation by CSNK2A1. Disordered stretches follow at residues 380–513 (EEKR…ECNK), 576–720 (SADM…VKAA), 748–844 (PPQT…PATW), 866–893 (LTAT…NAEM), 971–1200 (LQEN…SSKI), 1231–1270 (LGRH…VKPA), 1318–1388 (DSDQ…LVPI), 1409–1448 (LPVR…PELQ), 1527–1561 (KAKP…EDHL), 1592–1706 (IHSE…RASK), 1902–1926 (IVSK…LPTR), 1977–2014 (IQRE…QCVG), 2058–2083 (LDSG…SDVP), 2179–2206 (LVVQ…DLTS), 2260–2290 (GIFP…SGSL), and 2304–2449 (LPQS…EEVT). Residues 458–487 (EQDQNQEKKRRRNQGEANKQEATNLLERVL) are a coiled coil. The segment covering 649–660 (AAEKNHMEKETM) has biased composition (basic and acidic residues). Residues 809 to 824 (RFQKPKPNTGRRRRRI) are compositionally biased toward basic residues. 6 stretches are compositionally biased toward basic and acidic residues: residues 873-884 (KDSESDVKDSGR), 992-1002 (TGKDLAMKEST), 1009-1041 (TEER…RGEM), 1089-1098 (EGKELNLRET), 1112-1130 (EKTD…ERES), and 1150-1170 (DLGK…EEHS). 4 stretches are compositionally biased toward polar residues: residues 1180 to 1200 (LSSS…SSKI), 1251 to 1265 (DTNL…QQPL), 1318 to 1330 (DSDQ…QHNV), and 1364 to 1382 (PPNS…NQEN). Composition is skewed to basic and acidic residues over residues 1429 to 1448 (QIVE…PELQ), 1536 to 1561 (RRKD…EDHL), and 1592 to 1603 (IHSEESGSDRND). Polar residues-rich tracts occupy residues 1621-1642 (EQPT…SSCP) and 1650-1665 (YPKT…SSAS). Residues 1688-1697 (RGSKRIRGKT) are compositionally biased toward basic residues. 3 stretches are compositionally biased toward basic and acidic residues: residues 1902-1913 (IVSKEQSNRDAA), 1977-1996 (IQRE…DKSH), and 2068-2078 (AAKEALKETPK). The span at 2185 to 2199 (PSLSPSRSGSSEKPP) shows a compositional bias: low complexity. Polar residues-rich tracts occupy residues 2262-2273 (FPTSESTHATSK), 2319-2334 (PASN…SSSK), and 2414-2429 (TAGS…SSDQ).

As to quaternary structure, component of TFIIIB complex. The TFIIIB complex has two activities, alpha and beta. The TFIIIB-alpha and TFIIIB-beta activities are required for transcription of genes with TFIIIC-bound internal promoters and PSE transcription factor-bound external promoters, respectively. The TFIIIB-alpha activity complex is composed of TBP, BDP1, and a complex containing both BRF2 and at least four stably associated proteins; YY1 facilitates the formation of TFIIIB-alpha activity complex. The TFIIIB-beta activity complex is composed of TBP, BDP1, and BRF1. Interacts with BRF1; this interaction diminishes during mitosis resulting in the release of BDP1 from chromosomal templates. Component of TFIIIC complex. The TFIIIC complex has two activities, C1 and C2. The TFIIIC2 activity complex is only required for transcription of the 'classical' pol III genes whereas the TFIIIC1 activity complex is required for transcription of all pol III genes. The TFIIIC1 activity complex is composed at least of BDP1. Interacts with ZBTB43. In terms of processing, phosphorylated by CSNK2A1 during mitosis, resulting in its release from chromatin and suppression of polymerase III transcription. Expressed in the cochlea, particularly in the spiral ligament, the capillaries of the stria vascularis and the basilar membrane.

It localises to the nucleus. General activator of RNA polymerase III transcription. Requires for transcription from all three types of polymerase III promoters. Requires for transcription of genes with internal promoter elements and with promoter elements upstream of the initiation site. This Mus musculus (Mouse) protein is Transcription factor TFIIIB component B'' homolog (Bdp1).